A 294-amino-acid polypeptide reads, in one-letter code: tRNA dimethylallyltransferase (294 aa).

10–17 (GPTAVGKT) contacts ATP. Substrate is bound at residue 12–17 (TAVGKT). Residues 35-38 (DSQQ) are interaction with substrate tRNA.

It belongs to the IPP transferase family. As to quaternary structure, monomer. Mg(2+) is required as a cofactor.

It carries out the reaction adenosine(37) in tRNA + dimethylallyl diphosphate = N(6)-dimethylallyladenosine(37) in tRNA + diphosphate. Its function is as follows. Catalyzes the transfer of a dimethylallyl group onto the adenine at position 37 in tRNAs that read codons beginning with uridine, leading to the formation of N6-(dimethylallyl)adenosine (i(6)A). The chain is tRNA dimethylallyltransferase from Streptococcus pneumoniae serotype 4 (strain ATCC BAA-334 / TIGR4).